The following is a 114-amino-acid chain: Large ribosomal subunit protein bL20 (114 aa).

Belongs to the bacterial ribosomal protein bL20 family.

In terms of biological role, binds directly to 23S ribosomal RNA and is necessary for the in vitro assembly process of the 50S ribosomal subunit. It is not involved in the protein synthesizing functions of that subunit. This is Large ribosomal subunit protein bL20 from Anaeromyxobacter dehalogenans (strain 2CP-1 / ATCC BAA-258).